We begin with the raw amino-acid sequence, 621 residues long: Na(+)/H(+) antiporter NhaA (621 aa).

Residues 1–430 are na(+)/H(+) antiporter NhaA; that stretch reads MPASSFGESS…LGWLIFKVAA (430 aa). The next 11 membrane-spanning stretches (helical) occupy residues 27–47, 72–92, 109–129, 139–159, 168–188, 192–212, 223–243, 300–320, 339–359, 375–395, and 409–429; these read GAAV…NSPL, LHHW…GLEV, LALI…VLIV, GWGA…AIVG, VFLL…IGIV, EIRI…WLLG, VLIV…ASLA, FLRL…NAGV, VIAG…LVAV, VFGG…IIGL, and VGVL…FKVA. Residues 431 to 578 form the Thioredoxin domain; the sequence is QRWGEKTADL…VERDLASAVA (148 aa).

In the N-terminal section; belongs to the NhaA Na(+)/H(+) (TC 2.A.33) antiporter family.

Its subcellular location is the cell inner membrane. It carries out the reaction Na(+)(in) + 2 H(+)(out) = Na(+)(out) + 2 H(+)(in). Na(+)/H(+) antiporter that extrudes sodium in exchange for external protons. The sequence is that of Na(+)/H(+) antiporter NhaA from Herminiimonas arsenicoxydans.